The sequence spans 523 residues: Succinate-semialdehyde dehydrogenase, mitochondrial (523 aa).

Residues 1-35 constitute a mitochondrion transit peptide; sequence MATCFLLRNFCAARPALRPPGRLLREPAGAQRRSY. The residue at position 114 (lysine 114) is an N6-acetyllysine; alternate. An N6-succinyllysine; alternate modification is found at lysine 114. Lysine 123 and lysine 172 each carry N6-succinyllysine. NAD(+) is bound by residues arginine 201 and 216–219; that span reads KPAE. Residue arginine 201 participates in substrate binding. Lysine 253 carries the post-translational modification N6-acetyllysine; alternate. An N6-succinyllysine; alternate modification is found at lysine 253. 272–277 serves as a coordination point for NAD(+); that stretch reads GSTATG. Catalysis depends on glutamate 294, which acts as the Proton acceptor. A substrate-binding site is contributed by arginine 322. The active-site Nucleophile is cysteine 328. The cysteines at positions 328 and 330 are disulfide-linked. N6-acetyllysine is present on lysine 353. Lysine 390 carries the post-translational modification N6-succinyllysine. Lysine 399 carries the post-translational modification N6-acetyllysine. Serine 486 contacts substrate. Serine 487 carries the phosphoserine modification.

This sequence belongs to the aldehyde dehydrogenase family. In terms of assembly, homotetramer. In terms of tissue distribution, brain, pancreas, heart, liver, skeletal muscle, kidney. Lower in spleen, lung, kidney and testis.

It localises to the mitochondrion. The enzyme catalyses succinate semialdehyde + NAD(+) + H2O = succinate + NADH + 2 H(+). Its pathway is amino-acid degradation; 4-aminobutanoate degradation. Redox-regulated. Inhibited under oxydizing conditions. In terms of biological role, catalyzes one step in the degradation of the inhibitory neurotransmitter gamma-aminobutyric acid (GABA). The sequence is that of Succinate-semialdehyde dehydrogenase, mitochondrial (Aldh5a1) from Rattus norvegicus (Rat).